Reading from the N-terminus, the 113-residue chain is MDQEAGFMVNFINSYFIALGVLIGGALIGGLGAYLAGEPPLTAITKLANRLKIWALVAAIGGTFDAVYSFERGILEGNTRDIFKQLLLIISAMGGAQSGWLIISWLTQEHLSS.

Helical transmembrane passes span 16-36 (FIALGVLIGGALIGGLGAYLA), 51-71 (LKIWALVAAIGGTFDAVYSFE), and 86-106 (LLLIISAMGGAQSGWLIISWL).

Its subcellular location is the forespore outer membrane. In terms of biological role, involved in sporulation. May contribute to cortex formation or stability. This Bacillus subtilis (strain 168) protein is Sporulation membrane protein YtrH (ytrH).